A 235-amino-acid chain; its full sequence is Small ribosomal subunit protein uS3 (235 aa).

One can recognise a KH type-2 domain in the interval 39 to 107; it reads VRKFLNKELA…PAQINIAEVK (69 aa).

Belongs to the universal ribosomal protein uS3 family. Part of the 30S ribosomal subunit. Forms a tight complex with proteins S10 and S14.

Functionally, binds the lower part of the 30S subunit head. Binds mRNA in the 70S ribosome, positioning it for translation. The chain is Small ribosomal subunit protein uS3 from Actinobacillus pleuropneumoniae serotype 5b (strain L20).